The chain runs to 331 residues: 2-hydroxyacid dehydrogenase homolog (331 aa).

NAD(+)-binding positions include 154-155 (KI), 232-234 (TSR), and aspartate 258. Arginine 234 is a catalytic residue. Glutamate 263 is a catalytic residue. Catalysis depends on histidine 295, which acts as the Proton donor. 295 to 298 (HQAF) is an NAD(+) binding site.

It belongs to the D-isomer specific 2-hydroxyacid dehydrogenase family.

The polypeptide is 2-hydroxyacid dehydrogenase homolog (ddh) (Haemophilus influenzae (strain ATCC 51907 / DSM 11121 / KW20 / Rd)).